Reading from the N-terminus, the 420-residue chain is MAILTLGVNHTTAPVSIRERLAFPAEQLQSALRDLIDLPQVGEAAILSTCNRTEVYCELDGRDQRPIVDWMCDQRQFDDQDISQYLYSHFDAGTIRHMFRVACGLDSMILGEPQILGQMKTAYQAAREAGTVGKILTKLFHRTFAAAKKVRTDTAIGCSPVSVAFAAIRLAQRIFDDLGDLTAILVGAGETIELTARHLTENRIGHLIIANRTFDRAHTLANQFGGFAISLEELPKHLAKADIIVASTGSPLPILGKGSFESALRSRRHKPMFIVDLAVPRDIEPEVEQLQDVYLYTVDDLQHTVEENLKTRQEAALQAEEIIDLEVEHFLSWLRAQAATETIRDVRRQAELHRDAALQRALRELRRGKSAEDTLRWLADTLTNKIIHAPSSQIWQAGVNERADIVAAARELFQLKDPDT.

Residues 49–52 (TCNR), Ser107, 112–114 (EPQ), and Gln118 contribute to the substrate site. Cys50 functions as the Nucleophile in the catalytic mechanism. Residue 187–192 (GAGETI) participates in NADP(+) binding.

This sequence belongs to the glutamyl-tRNA reductase family. In terms of assembly, homodimer.

The catalysed reaction is (S)-4-amino-5-oxopentanoate + tRNA(Glu) + NADP(+) = L-glutamyl-tRNA(Glu) + NADPH + H(+). It functions in the pathway porphyrin-containing compound metabolism; protoporphyrin-IX biosynthesis; 5-aminolevulinate from L-glutamyl-tRNA(Glu): step 1/2. In terms of biological role, catalyzes the NADPH-dependent reduction of glutamyl-tRNA(Glu) to glutamate 1-semialdehyde (GSA). The sequence is that of Glutamyl-tRNA reductase from Methylococcus capsulatus (strain ATCC 33009 / NCIMB 11132 / Bath).